The primary structure comprises 175 residues: MAIDFSKYIASVQDFPNKGIVFRDITPILQNGELYRAATHELAEYAKSRNADVIVGPEARGFIVGCPVATELGLGFVPARKPHKLPREVERASYDLEYGSNSLEMHKDAIKPGQRVVLCDDLMATAGTLRASKELIENLGGKLVGAAFYIELPDLKGREKLPDVDIYSLVKYHGA.

It belongs to the purine/pyrimidine phosphoribosyltransferase family. In terms of assembly, homodimer.

It is found in the cytoplasm. The enzyme catalyses AMP + diphosphate = 5-phospho-alpha-D-ribose 1-diphosphate + adenine. It participates in purine metabolism; AMP biosynthesis via salvage pathway; AMP from adenine: step 1/1. Catalyzes a salvage reaction resulting in the formation of AMP, that is energically less costly than de novo synthesis. This Lactobacillus acidophilus (strain ATCC 700396 / NCK56 / N2 / NCFM) protein is Adenine phosphoribosyltransferase.